Reading from the N-terminus, the 146-residue chain is Hemoglobin subunit beta (146 aa).

At alanine 1 the chain carries N-acetylalanine. The region spanning serine 2 to histidine 146 is the Globin domain. 2 residues coordinate heme b: histidine 63 and histidine 92.

The protein belongs to the globin family. As to quaternary structure, heterotetramer of two alpha chains and two beta chains. In terms of tissue distribution, red blood cells.

Functionally, involved in oxygen transport from the lung to the various peripheral tissues. This Crocodylus niloticus (Nile crocodile) protein is Hemoglobin subunit beta (HBB).